Reading from the N-terminus, the 208-residue chain is Large ribosomal subunit protein bL25 (208 aa).

Belongs to the bacterial ribosomal protein bL25 family. CTC subfamily. As to quaternary structure, part of the 50S ribosomal subunit; part of the 5S rRNA/L5/L18/L25 subcomplex. Contacts the 5S rRNA. Binds to the 5S rRNA independently of L5 and L18.

In terms of biological role, this is one of the proteins that binds to the 5S RNA in the ribosome where it forms part of the central protuberance. The sequence is that of Large ribosomal subunit protein bL25 from Burkholderia thailandensis (strain ATCC 700388 / DSM 13276 / CCUG 48851 / CIP 106301 / E264).